The primary structure comprises 333 residues: MKLGRAALALLLLAPCVVRAVEPISLSLALAGVLTTYISYPRLYCLFAECCGQMRSLSREALQKDLDNKLFGQHLAKKVILNAVSGFLSNPKPKKPLTLSLHGWTGTGKNFASKIIAENIYEGGLNSDYVHLFVATLHFPHASNITQYKDQLQMWIRGNVSACARSIFIFDEMDKMHAGLIDAIKPFLDYYDVVDEVSYQKAIFIFLSNAGAERITDVALDFWKSGKQREEIKLRDMEPALAVSVFNNKNSGFWHSSLIDRNLIDYFVPFLPLEYKHLKMCIRVEMQSRGYEVDEDIISKVAEEMTFFPKEEKVFSDKGCKTVFTKLDYYLDD.

The signal sequence occupies residues 1–20; the sequence is MKLGRAALALLLLAPCVVRA. The interaction with SNAPIN stretch occupies residues 92 to 252; it reads KPKKPLTLSL…VSVFNNKNSG (161 aa). 103–110 contacts ATP; that stretch reads GWTGTGKN. N-linked (GlcNAc...) asparagine glycosylation is found at Asn144 and Asn159. Residues 252–333 form an interaction with KLC1 region; that stretch reads GFWHSSLIDR…FTKLDYYLDD (82 aa). The interaction with SYNE3 stretch occupies residues 313–333; it reads KVFSDKGCKTVFTKLDYYLDD.

It belongs to the ClpA/ClpB family. Torsin subfamily. Homohexamer. Interacts with TOR1B; the interaction may be specific of neural tissues. Interacts (ATP-bound) with TOR1AIP1 and TOR1AIP2; the interactions induce ATPase activity. Interacts with KLHL14; preferentially when ATP-free. Interacts with KLC1 (via TPR repeats); the interaction associates TOR1A with the kinesin oligomeric complex. Interacts with COPS4; the interaction associates TOR1A with the CSN complex. Interacts with SNAPIN; the interaction is direct and associates SNAPIN with the CSN complex. Interacts with STON2. Interacts (ATP-bound) with SYNE3 (via KASH domain); the interaction is required for SYNE3 nuclear envelope localization. Interacts with VIM; the interaction associates TOR1A with the cytoskeleton. Interacts with PLEC. Interacts (ATP-bound) with SLC6A3; regulates SLC6A3 transport to the plasma membrane. In terms of processing, N-glycosylated. Widely expressed (at protein level).

The protein localises to the endoplasmic reticulum lumen. The protein resides in the nucleus membrane. It localises to the cell projection. Its subcellular location is the growth cone. It is found in the cytoplasmic vesicle membrane. The protein localises to the synapse. The protein resides in the synaptosome. It localises to the cytoplasm. Its subcellular location is the cytoskeleton. It is found in the cytoplasmic vesicle. The protein localises to the secretory vesicle. The protein resides in the synaptic vesicle. It carries out the reaction ATP + H2O = ADP + phosphate + H(+). In terms of biological role, protein with chaperone functions important for the control of protein folding, processing, stability and localization as well as for the reduction of misfolded protein aggregates. Involved in the regulation of synaptic vesicle recycling, controls STON2 protein stability in collaboration with the COP9 signalosome complex (CSN). In the nucleus, may link the cytoskeleton with the nuclear envelope, this mechanism seems to be crucial for the control of nuclear polarity, cell movement and, specifically in neurons, nuclear envelope integrity. Participates in the cellular trafficking and may regulate the subcellular location of multipass membrane proteins such as the dopamine transporter SLC6A3, leading to the modulation of dopamine neurotransmission. In the endoplasmic reticulum, plays a role in the quality control of protein folding by increasing clearance of misfolded proteins such as SGCE variants or holding them in an intermediate state for proper refolding. May have a redundant function with TOR1B in non-neural tissues. This Mus musculus (Mouse) protein is Torsin-1A (Tor1a).